We begin with the raw amino-acid sequence, 402 residues long: Phosphoglycerate kinase (402 aa).

Substrate is bound by residues 24-26 (DFN), arginine 40, 63-66 (HFGR), arginine 122, and arginine 155. Residues lysine 206, glycine 297, glutamate 328, and 357-360 (GGDS) contribute to the ATP site.

It belongs to the phosphoglycerate kinase family. As to quaternary structure, monomer.

It localises to the cytoplasm. It catalyses the reaction (2R)-3-phosphoglycerate + ATP = (2R)-3-phospho-glyceroyl phosphate + ADP. The protein operates within carbohydrate degradation; glycolysis; pyruvate from D-glyceraldehyde 3-phosphate: step 2/5. This is Phosphoglycerate kinase from Synechococcus sp. (strain CC9311).